Consider the following 364-residue polypeptide: Anthranilate phosphoribosyltransferase (364 aa).

Residues Gly-101, 104–105 (GD), Thr-109, 111–114 (NLST), 129–137 (KHGNRAASS), and Gly-141 contribute to the 5-phospho-alpha-D-ribose 1-diphosphate site. Gly-101 serves as a coordination point for anthranilate. Ser-113 contacts Mg(2+). Residue Asn-132 participates in anthranilate binding. Arg-187 provides a ligand contact to anthranilate. Mg(2+) contacts are provided by Asp-245 and Glu-246.

It belongs to the anthranilate phosphoribosyltransferase family. Homodimer. Mg(2+) is required as a cofactor.

It carries out the reaction N-(5-phospho-beta-D-ribosyl)anthranilate + diphosphate = 5-phospho-alpha-D-ribose 1-diphosphate + anthranilate. It participates in amino-acid biosynthesis; L-tryptophan biosynthesis; L-tryptophan from chorismate: step 2/5. In terms of biological role, catalyzes the transfer of the phosphoribosyl group of 5-phosphorylribose-1-pyrophosphate (PRPP) to anthranilate to yield N-(5'-phosphoribosyl)-anthranilate (PRA). The chain is Anthranilate phosphoribosyltransferase from Mycolicibacterium gilvum (strain PYR-GCK) (Mycobacterium gilvum (strain PYR-GCK)).